The following is a 227-amino-acid chain: Protein Saci_0792 (227 aa).

The AMMECR1 domain maps to 15–209; it reads DIGKQLIKIA…EINKNTDEII (195 aa).

This is Protein Saci_0792 from Sulfolobus acidocaldarius (strain ATCC 33909 / DSM 639 / JCM 8929 / NBRC 15157 / NCIMB 11770).